A 419-amino-acid chain; its full sequence is Bilin biosynthesis protein CpeY (419 aa).

Functionally, involved in the biosynthesis of bilin. This chain is Bilin biosynthesis protein CpeY (cpeY), found in Synechococcus sp. (strain WH8020).